Here is a 1673-residue protein sequence, read N- to C-terminus: Calmodulin-binding transcription activator 1 (1673 aa).

The segment at residues K63–C188 is a DNA-binding region (CG-1). The Nuclear localization signal signature appears at R112–K119. The tract at residues H283–S375 is disordered. Over residues E302 to H313 the composition is skewed to basic and acidic residues. The span at H337–N367 shows a compositional bias: polar residues. The IPT/TIG domain maps to D875–K953. The tract at residues M990–A1021 is disordered. Over residues S1003–G1018 the composition is skewed to gly residues. ANK repeat units lie at residues R1064 to D1093, F1109 to L1129, and L1143 to A1172. Disordered regions lie at residues A1215–H1246 and A1264–P1317. The segment covering R1273–P1289 has biased composition (polar residues). IQ domains are found at residues Q1547–L1576, I1577–L1599, and I1600–I1622.

This sequence belongs to the CAMTA family. As to quaternary structure, may interact with calmodulin. As to expression, normally expressed in non-neoplastic adult central nervous system tissues: detected in whole brain, cerebellum, brain cortex, occipital lobe, frontal lobe, temporal lobe, putamen. Expression levels are low in oligodendroglial tumors, and are reduced by half in oligodendroglioma and astrocytoma cases with 1p loss of heterozygosity. Detected in neuroblastic-type cultured neuroblastoma cells. Expressed in heart and kidney.

Its subcellular location is the nucleus. The protein resides in the cytoplasm. In terms of biological role, transcriptional activator. The protein is Calmodulin-binding transcription activator 1 of Homo sapiens (Human).